We begin with the raw amino-acid sequence, 312 residues long: Ribosomal RNA small subunit methyltransferase H (312 aa).

Residues 33–35 (AGH), aspartate 53, phenylalanine 79, aspartate 100, and glutamine 107 each bind S-adenosyl-L-methionine.

It belongs to the methyltransferase superfamily. RsmH family.

The protein localises to the cytoplasm. The catalysed reaction is cytidine(1402) in 16S rRNA + S-adenosyl-L-methionine = N(4)-methylcytidine(1402) in 16S rRNA + S-adenosyl-L-homocysteine + H(+). Functionally, specifically methylates the N4 position of cytidine in position 1402 (C1402) of 16S rRNA. In Clostridium acetobutylicum (strain ATCC 824 / DSM 792 / JCM 1419 / IAM 19013 / LMG 5710 / NBRC 13948 / NRRL B-527 / VKM B-1787 / 2291 / W), this protein is Ribosomal RNA small subunit methyltransferase H.